A 923-amino-acid polypeptide reads, in one-letter code: RNA polymerase-associated protein RapA (923 aa).

The Helicase ATP-binding domain maps to 162–332 (EVGNRVNPRV…FARLRLLDPE (171 aa)). 175 to 182 (DEVGLGKT) is an ATP binding site. Residues 278-281 (DEAH) carry the DEAH box motif. Residues 443 to 597 (KIDWLIDFLK…TCPMGMALFS (155 aa)) enclose the Helicase C-terminal domain.

The protein belongs to the SNF2/RAD54 helicase family. RapA subfamily. Interacts with the RNAP. Has a higher affinity for the core RNAP than for the holoenzyme. Its ATPase activity is stimulated by binding to RNAP.

In terms of biological role, transcription regulator that activates transcription by stimulating RNA polymerase (RNAP) recycling in case of stress conditions such as supercoiled DNA or high salt concentrations. Probably acts by releasing the RNAP, when it is trapped or immobilized on tightly supercoiled DNA. Does not activate transcription on linear DNA. Probably not involved in DNA repair. The chain is RNA polymerase-associated protein RapA from Haemophilus influenzae (strain PittEE).